Consider the following 640-residue polypeptide: Threonine--tRNA ligase (640 aa).

One can recognise a TGS domain in the interval M1–T61. Residues D242–P533 form a catalytic region. C334, H385, and H510 together coordinate Zn(2+).

The protein belongs to the class-II aminoacyl-tRNA synthetase family. In terms of assembly, homodimer. It depends on Zn(2+) as a cofactor.

The protein localises to the cytoplasm. The enzyme catalyses tRNA(Thr) + L-threonine + ATP = L-threonyl-tRNA(Thr) + AMP + diphosphate + H(+). Catalyzes the attachment of threonine to tRNA(Thr) in a two-step reaction: L-threonine is first activated by ATP to form Thr-AMP and then transferred to the acceptor end of tRNA(Thr). Also edits incorrectly charged L-seryl-tRNA(Thr). This chain is Threonine--tRNA ligase, found in Petrotoga mobilis (strain DSM 10674 / SJ95).